A 174-amino-acid polypeptide reads, in one-letter code: Myeloid-derived growth factor (174 aa).

An N-terminal signal peptide occupies residues 1 to 32 (MAAPSGRRNGSGGANLWVSLLLAAAALRPVET).

The protein belongs to the MYDGF family.

The protein localises to the secreted. It is found in the endoplasmic reticulum-Golgi intermediate compartment. It localises to the endoplasmic reticulum. Its subcellular location is the golgi apparatus. Its function is as follows. Bone marrow-derived monocyte and paracrine-acting protein that promotes cardiac myocyte survival and adaptive angiogenesis for cardiac protection and/or repair after myocardial infarction (MI). Stimulates endothelial cell proliferation through a MAPK1/3-, STAT3- and CCND1-mediated signaling pathway. Inhibits cardiac myocyte apoptosis in a PI3K/AKT-dependent signaling pathway. This is Myeloid-derived growth factor from Bos taurus (Bovine).